Consider the following 230-residue polypeptide: Large ribosomal subunit protein uL1 (230 aa).

Belongs to the universal ribosomal protein uL1 family. Part of the 50S ribosomal subunit.

Its function is as follows. Binds directly to 23S rRNA. The L1 stalk is quite mobile in the ribosome, and is involved in E site tRNA release. Protein L1 is also a translational repressor protein, it controls the translation of the L11 operon by binding to its mRNA. The protein is Large ribosomal subunit protein uL1 of Bacillus cereus (strain G9842).